Reading from the N-terminus, the 161-residue chain is Nucleotide-binding protein Plav_2177 (161 aa).

Belongs to the YajQ family.

Its function is as follows. Nucleotide-binding protein. The polypeptide is Nucleotide-binding protein Plav_2177 (Parvibaculum lavamentivorans (strain DS-1 / DSM 13023 / NCIMB 13966)).